The chain runs to 200 residues: UPF0301 protein BOV_0485 (200 aa).

Belongs to the UPF0301 (AlgH) family.

The polypeptide is UPF0301 protein BOV_0485 (Brucella ovis (strain ATCC 25840 / 63/290 / NCTC 10512)).